The chain runs to 162 residues: UPF0178 protein RSKD131_2223 (162 aa).

Belongs to the UPF0178 family.

This is UPF0178 protein RSKD131_2223 from Cereibacter sphaeroides (strain KD131 / KCTC 12085) (Rhodobacter sphaeroides).